We begin with the raw amino-acid sequence, 673 residues long: UvrABC system protein B (673 aa).

The Helicase ATP-binding domain maps to E26–R183. G39–T46 lines the ATP pocket. Residues Y92–V115 carry the Beta-hairpin motif. Residues Q431–L597 form the Helicase C-terminal domain. Residues Q633–L668 form the UVR domain.

It belongs to the UvrB family. Forms a heterotetramer with UvrA during the search for lesions. Interacts with UvrC in an incision complex.

It localises to the cytoplasm. Its function is as follows. The UvrABC repair system catalyzes the recognition and processing of DNA lesions. A damage recognition complex composed of 2 UvrA and 2 UvrB subunits scans DNA for abnormalities. Upon binding of the UvrA(2)B(2) complex to a putative damaged site, the DNA wraps around one UvrB monomer. DNA wrap is dependent on ATP binding by UvrB and probably causes local melting of the DNA helix, facilitating insertion of UvrB beta-hairpin between the DNA strands. Then UvrB probes one DNA strand for the presence of a lesion. If a lesion is found the UvrA subunits dissociate and the UvrB-DNA preincision complex is formed. This complex is subsequently bound by UvrC and the second UvrB is released. If no lesion is found, the DNA wraps around the other UvrB subunit that will check the other stand for damage. The sequence is that of UvrABC system protein B from Salmonella agona (strain SL483).